The sequence spans 753 residues: Fatty acid oxidation complex subunit alpha (753 aa).

Residues 8–197 form an enoyl-CoA hydratase region; it reads SVTHPAFTLN…KMGLVDDVVP (190 aa). A 3-hydroxyacyl-CoA dehydrogenase region spans residues 313-747; that stretch reads RAIHRVGVLG…FYPVDANIDE (435 aa). Residues 593 to 622 form a disordered region; the sequence is SNPTLHSNSTKNSSPTKNGNSPAKRNSFKW. Positions 599–614 are enriched in low complexity; sequence SNSTKNSSPTKNGNSP.

The protein in the N-terminal section; belongs to the enoyl-CoA hydratase/isomerase family. It in the central section; belongs to the 3-hydroxyacyl-CoA dehydrogenase family. In terms of assembly, heterotetramer of two alpha chains (FadJ) and two beta chains (FadI).

The protein resides in the cytoplasm. The catalysed reaction is a (3S)-3-hydroxyacyl-CoA = a (2E)-enoyl-CoA + H2O. It catalyses the reaction a 4-saturated-(3S)-3-hydroxyacyl-CoA = a (3E)-enoyl-CoA + H2O. It carries out the reaction a (3S)-3-hydroxyacyl-CoA + NAD(+) = a 3-oxoacyl-CoA + NADH + H(+). The enzyme catalyses (3S)-3-hydroxybutanoyl-CoA = (3R)-3-hydroxybutanoyl-CoA. It functions in the pathway lipid metabolism; fatty acid beta-oxidation. In terms of biological role, catalyzes the formation of a hydroxyacyl-CoA by addition of water on enoyl-CoA. Also exhibits 3-hydroxyacyl-CoA epimerase and 3-hydroxyacyl-CoA dehydrogenase activities. This is Fatty acid oxidation complex subunit alpha from Yersinia pseudotuberculosis serotype I (strain IP32953).